The sequence spans 20 residues: Dihydroorotase-like protein (20 aa).

The protein belongs to the metallo-dependent hydrolases superfamily. DHOase family. PyrC' subfamily. Heterododecamer of 6 active PyrB subunits and 6 non-catalytic PyrC' subunits.

Non-functional DHOase. This chain is Dihydroorotase-like protein (pyrC'), found in Pseudomonas fluorescens biotype A.